The sequence spans 743 residues: Dolichyl-phosphooligosaccharide-protein glycotransferase 2 (743 aa).

Residues Met-1–Leu-7 lie on the Cytoplasmic side of the membrane. A helical transmembrane segment spans residues Met-8–Val-28. The DXD motif 1 signature appears at Gly-29–Asp-31. At Gly-29–Thr-91 the chain is on the extracellular side. Residue Asp-31 coordinates Mn(2+). A helical transmembrane segment spans residues Ala-92 to Leu-112. The Cytoplasmic portion of the chain corresponds to Lys-113 to Asp-119. A helical membrane pass occupies residues Val-120–Ala-140. The Extracellular portion of the chain corresponds to Asn-141–Arg-144. Arg-144 and Asp-146 together coordinate Mn(2+). The short motif at Arg-144–Asp-146 is the DXD motif 2 element. The chain crosses the membrane as a helical span at residues Gly-145 to Lys-165. Residues Thr-166–Tyr-170 are Cytoplasmic-facing. 2 helical membrane-spanning segments follow: residues Arg-171–Ala-191 and Tyr-192–Leu-212. Residues Lys-213–Lys-216 lie on the Cytoplasmic side of the membrane. The helical transmembrane segment at Leu-217–Ile-237 threads the bilayer. At Leu-238 to Tyr-272 the chain is on the extracellular side. Residues Leu-273 to Ile-293 form a helical membrane-spanning segment. The Cytoplasmic portion of the chain corresponds to Thr-294 to Lys-302. The chain crosses the membrane as a helical span at residues Val-303–Ala-323. The Extracellular portion of the chain corresponds to Leu-324–Pro-345. Residues Thr-333 to Glu-336 carry the TIXE motif motif. Residues Thr-346–Leu-366 traverse the membrane as a helical segment. The Cytoplasmic segment spans residues Arg-367–Ser-373. Residues Gly-374 to Tyr-391 traverse the membrane as a helical segment. Over Trp-392–Arg-394 the chain is Extracellular. Arg-394 lines the a glycophospholipid pocket. A helical transmembrane segment spans residues Phe-395–Thr-415. Residues Arg-416–Arg-424 are Cytoplasmic-facing. A helical transmembrane segment spans residues Ile-425–Ser-445. Residues Val-446 to Asn-743 lie on the Extracellular side of the membrane. The interval Trp-474 to Asp-476 is interacts with target acceptor peptide in protein substrate. The short motif at Trp-474 to Gly-478 is the WWDYG motif element. Positions Asp-526–Ile-533 match the DK motif motif.

It belongs to the STT3 family. The cofactor is Mn(2+). Mg(2+) serves as cofactor.

It localises to the cell membrane. It catalyses the reaction an archaeal dolichyl phosphooligosaccharide + [protein]-L-asparagine = an archaeal dolichyl phosphate + a glycoprotein with the oligosaccharide chain attached by N-beta-D-glycosyl linkage to a protein L-asparagine.. It functions in the pathway protein modification; protein glycosylation. Functionally, oligosaccharyl transferase (OST) that catalyzes the initial transfer of a defined glycan (ManNAcXyl(2)GlcAMan(2)GalNAc in P.furiosus) from the lipid carrier dolichol-monophosphate to an asparagine residue within an Asn-X-Ser/Thr consensus motif in nascent polypeptide chains, the first step in protein N-glycosylation. This is Dolichyl-phosphooligosaccharide-protein glycotransferase 2 (aglB2) from Pyrococcus furiosus (strain ATCC 43587 / DSM 3638 / JCM 8422 / Vc1).